Consider the following 31-residue polypeptide: Protamine-1B (31 aa).

A disordered region spans residues 1–31; the sequence is MPRRRRASRRIRRRRRPRVSRRRRRGGRRRR.

As to expression, testis.

It localises to the nucleus. Its subcellular location is the chromosome. In terms of biological role, protamines substitute for histones in the chromatin of sperm during the haploid phase of spermatogenesis. They compact sperm DNA into a highly condensed, stable and inactive complex. The protein is Protamine-1B of Oncorhynchus mykiss (Rainbow trout).